The sequence spans 587 residues: Synaptotagmin-3 (587 aa).

Topologically, residues 1-54 (MSGDYEDDLCRRALILVSDLCARVRDADTNDRCQEFNELRIRGYPRGPDADISV) are vesicular. The interval 10 to 34 (CRRALILVSDLCARVRDADTNDRCQ) is cysteine motif. Residues 55 to 75 (SLLSVIVTFCGIVLLGVSLFV) form a helical membrane-spanning segment. The Cytoplasmic portion of the chain corresponds to 76–587 (SWKLCWVPWR…KGLSEKENSE (512 aa)). A compositionally biased stretch (low complexity) spans 183–205 (PSQTSPELPSEGGTGSGLLLLPP). A disordered region spans residues 183–258 (PSQTSPELPS…EERPPALPLP (76 aa)). Residues 213–224 (AQSHQQVTSLAP) are compositionally biased toward polar residues. Residues 229-244 (PALPRPLTQQTLTTQA) show a composition bias toward low complexity. R286 bears the Omega-N-methylarginine mark. 2 C2 domains span residues 296 to 417 (PCGR…PLWR) and 428 to 562 (DLGE…EHWH). Ca(2+)-binding residues include D327, D333, D385, F386, D387, S390, D393, D459, D465, D519, and D521.

It belongs to the synaptotagmin family. As to quaternary structure, homodimer; disulfide-linked via the cysteine motif. Can also form heterodimers with SYT6, SYT9 and SYT10. The cofactor is Ca(2+).

It is found in the cell membrane. Its subcellular location is the cytoplasmic vesicle. It localises to the secretory vesicle membrane. Its function is as follows. Ca(2+) sensor involved in Ca(2+)-dependent exocytosis of secretory vesicles through Ca(2+) and phospholipid binding to the C2 domain. Ca(2+) induces binding of the C2-domains to phospholipid membranes and to assembled SNARE-complexes; both actions contribute to triggering exocytosis. Plays a role in dendrite formation by melanocytes. The protein is Synaptotagmin-3 (Syt3) of Mus musculus (Mouse).